Here is a 726-residue protein sequence, read N- to C-terminus: Netrin-A (726 aa).

A signal peptide spans 1-29 (MIRGILLLLLGTTRFSPIQCISNDVYFKM). The 267-residue stretch at 46–312 (EPRACIPDFV…AISDFSVGGR (267 aa)) folds into the Laminin N-terminal domain. Residues Asn-108, Asn-112, and Asn-127 are each glycosylated (N-linked (GlcNAc...) asparagine). 12 disulfides stabilise this stretch: Cys-313/Cys-322, Cys-315/Cys-332, Cys-334/Cys-343, Cys-346/Cys-366, Cys-369/Cys-378, Cys-371/Cys-396, Cys-399/Cys-408, Cys-411/Cys-429, Cys-432/Cys-444, Cys-434/Cys-451, Cys-453/Cys-462, and Cys-465/Cys-479. Laminin EGF-like domains follow at residues 313–368 (CKCN…ECKE), 369–431 (CNCN…VCKA), and 432–481 (CDCH…PCIK). Asn-445 is a glycosylation site (N-linked (GlcNAc...) asparagine). The interval 490 to 516 (LDTQNTAPEPDEPESSPGSGGDRNGAA) is disordered. 2 cysteine pairs are disulfide-bonded: Cys-533-Cys-671 and Cys-549-Cys-725. The NTR domain maps to 533 to 725 (CGKCRVSTKR…KRFQRRARTC (193 aa)). Asn-652 and Asn-679 each carry an N-linked (GlcNAc...) asparagine glycan.

In terms of tissue distribution, at the midline of developing CNS at the time of commissure formation and in different subsets of neurons, muscles, and epidermal patches.

Its subcellular location is the secreted. It localises to the extracellular space. It is found in the extracellular matrix. In terms of biological role, netrins control guidance of CNS commissural axons at the midline and peripheral motor axons to their target muscles. The sequence is that of Netrin-A (NetA) from Drosophila melanogaster (Fruit fly).